We begin with the raw amino-acid sequence, 421 residues long: Serine hydroxymethyltransferase (421 aa).

(6S)-5,6,7,8-tetrahydrofolate is bound by residues Leu121 and 125 to 127 (GHL). N6-(pyridoxal phosphate)lysine is present on Lys229.

The protein belongs to the SHMT family. In terms of assembly, homodimer. The cofactor is pyridoxal 5'-phosphate.

The protein localises to the cytoplasm. The enzyme catalyses (6R)-5,10-methylene-5,6,7,8-tetrahydrofolate + glycine + H2O = (6S)-5,6,7,8-tetrahydrofolate + L-serine. It participates in one-carbon metabolism; tetrahydrofolate interconversion. It functions in the pathway amino-acid biosynthesis; glycine biosynthesis; glycine from L-serine: step 1/1. Its function is as follows. Catalyzes the reversible interconversion of serine and glycine with tetrahydrofolate (THF) serving as the one-carbon carrier. This reaction serves as the major source of one-carbon groups required for the biosynthesis of purines, thymidylate, methionine, and other important biomolecules. Also exhibits THF-independent aldolase activity toward beta-hydroxyamino acids, producing glycine and aldehydes, via a retro-aldol mechanism. In Haemophilus influenzae (strain PittGG), this protein is Serine hydroxymethyltransferase.